The following is a 177-amino-acid chain: MRVLGIDPGLTRCGMGVVDGSVGRPLTLVDVNVLRTSADLPVPERLVTIERGVEAWIEEHAPDAVAIERVFARSDVSTVMGTAQASGVAMVVAARRGLPIGLHTPSEVKAAVSGNGRAGKAQVGAMVTRILRLDVMPKPADAADALALAITHIWRGGAQARIDAAVTAARQQVRSRR.

Catalysis depends on residues aspartate 7, glutamate 68, and aspartate 141. Mg(2+)-binding residues include aspartate 7, glutamate 68, and aspartate 141.

The protein belongs to the RuvC family. As to quaternary structure, homodimer which binds Holliday junction (HJ) DNA. The HJ becomes 2-fold symmetrical on binding to RuvC with unstacked arms; it has a different conformation from HJ DNA in complex with RuvA. In the full resolvosome a probable DNA-RuvA(4)-RuvB(12)-RuvC(2) complex forms which resolves the HJ. The cofactor is Mg(2+).

The protein localises to the cytoplasm. The catalysed reaction is Endonucleolytic cleavage at a junction such as a reciprocal single-stranded crossover between two homologous DNA duplexes (Holliday junction).. Its function is as follows. The RuvA-RuvB-RuvC complex processes Holliday junction (HJ) DNA during genetic recombination and DNA repair. Endonuclease that resolves HJ intermediates. Cleaves cruciform DNA by making single-stranded nicks across the HJ at symmetrical positions within the homologous arms, yielding a 5'-phosphate and a 3'-hydroxyl group; requires a central core of homology in the junction. The consensus cleavage sequence is 5'-(A/T)TT(C/G)-3'. Cleavage occurs on the 3'-side of the TT dinucleotide at the point of strand exchange. HJ branch migration catalyzed by RuvA-RuvB allows RuvC to scan DNA until it finds its consensus sequence, where it cleaves and resolves the cruciform DNA. In Nocardioides sp. (strain ATCC BAA-499 / JS614), this protein is Crossover junction endodeoxyribonuclease RuvC.